Reading from the N-terminus, the 88-residue chain is Phosphocarrier protein HPr (88 aa).

An HPr domain is found at 1–88 (MVVKTVRVLN…RLFQNKFEEE (88 aa)). His-15 acts as the Pros-phosphohistidine intermediate in catalysis. Ser-46 carries the post-translational modification Phosphoserine; by HPrK/P.

The protein belongs to the HPr family.

It localises to the cytoplasm. Its activity is regulated as follows. Phosphorylation on Ser-46 inhibits the phosphoryl transfer from enzyme I to HPr. In terms of biological role, general (non sugar-specific) component of the phosphoenolpyruvate-dependent sugar phosphotransferase system (sugar PTS). This major carbohydrate active-transport system catalyzes the phosphorylation of incoming sugar substrates concomitantly with their translocation across the cell membrane. The phosphoryl group from phosphoenolpyruvate (PEP) is transferred to the phosphoryl carrier protein HPr by enzyme I. Phospho-HPr then transfers it to the PTS EIIA domain. This chain is Phosphocarrier protein HPr (ptsH), found in Treponema pallidum (strain Nichols).